Reading from the N-terminus, the 1225-residue chain is uncharacterized protein (1225 aa).

The signal sequence occupies residues 1–27; sequence MKRFLHRVKWPLLLSSIAVSLGIVAVA. C28 carries N-palmitoyl cysteine lipidation. Residue C28 is the site of S-diacylglycerol cysteine attachment. Residues 995–1014 form a disordered region; sequence QSEKSSSNGGQAQLQSTQSS.

Belongs to the MG307/MG309/MG338 family.

It is found in the cell membrane. This is an uncharacterized protein from Mycoplasma genitalium (strain ATCC 33530 / DSM 19775 / NCTC 10195 / G37) (Mycoplasmoides genitalium).